The chain runs to 305 residues: Oligopeptide transport ATP-binding protein OppF (305 aa).

One can recognise an ABC transporter domain in the interval 6–251 (LEIKHLKQHF…PLHPYTKSLL (246 aa)). 42–49 (GESGCGKS) serves as a coordination point for ATP.

The protein belongs to the ABC transporter superfamily. The complex is composed of two ATP-binding proteins (OppD and OppF), two transmembrane proteins (OppB and OppC) and a solute-binding protein (OppA).

It localises to the cell membrane. It catalyses the reaction a [peptide](out) + ATP + H2O = a [peptide](in) + ADP + phosphate + H(+). Functionally, part of the ABC transporter complex OppABCDF involved in the uptake of oligopeptides. Probably responsible for energy coupling to the transport system. Required for genetic competence but not for peptide transport or for sporulation. This is Oligopeptide transport ATP-binding protein OppF from Bacillus subtilis (strain 168).